The following is a 322-amino-acid chain: Solute carrier family 25 member 16 (322 aa).

3 Solcar repeats span residues 34–120 (FYWL…YKTF), 128–219 (SGHV…LKSV), and 241–322 (LKTH…AVAF).

It belongs to the mitochondrial carrier (TC 2.A.29) family.

The protein localises to the mitochondrion inner membrane. Functionally, may be involved in the transport of coenzyme A in the mitochondrial matrix. Very little is known about the physiological function of this carrier. This chain is Solute carrier family 25 member 16, found in Rattus norvegicus (Rat).